A 551-amino-acid polypeptide reads, in one-letter code: DNA ligase (551 aa).

E246 contributes to the ATP binding site. The active-site N6-AMP-lysine intermediate is the K248. Residues R253, R268, E298, F337, R414, and K420 each contribute to the ATP site.

The protein belongs to the ATP-dependent DNA ligase family. It depends on Mg(2+) as a cofactor.

The catalysed reaction is ATP + (deoxyribonucleotide)n-3'-hydroxyl + 5'-phospho-(deoxyribonucleotide)m = (deoxyribonucleotide)n+m + AMP + diphosphate.. DNA ligase that seals nicks in double-stranded DNA during DNA replication, DNA recombination and DNA repair. The polypeptide is DNA ligase (Methanobrevibacter smithii (strain ATCC 35061 / DSM 861 / OCM 144 / PS)).